A 390-amino-acid chain; its full sequence is Stearoyl-[acyl-carrier-protein] 9-desaturase 5, chloroplastic (390 aa).

Residues 1 to 22 (MAFAASHTASPSSCGGVAQRRS) are disordered. The transit peptide at 1-31 (MAFAASHTASPSSCGGVAQRRSNGMSPVVAM) directs the protein to the chloroplast. Positions 132, 170, 173, 223, 256, and 259 each coordinate Fe cation.

It belongs to the fatty acid desaturase type 2 family. Homodimer. It depends on Fe(2+) as a cofactor.

The protein resides in the plastid. It is found in the chloroplast. It catalyses the reaction octadecanoyl-[ACP] + 2 reduced [2Fe-2S]-[ferredoxin] + O2 + 2 H(+) = (9Z)-octadecenoyl-[ACP] + 2 oxidized [2Fe-2S]-[ferredoxin] + 2 H2O. Its pathway is lipid metabolism; fatty acid metabolism. In terms of biological role, converts stearoyl-ACP to oleoyl-ACP by introduction of a cis double bond between carbons 9 and 10 of the acyl chain. The protein is Stearoyl-[acyl-carrier-protein] 9-desaturase 5, chloroplastic of Oryza sativa subsp. japonica (Rice).